The primary structure comprises 511 residues: Histidine ammonia-lyase (511 aa).

The 5-imidazolinone (Ala-Gly) cross-link spans 142–144 (ASG). Serine 143 is modified (2,3-didehydroalanine (Ser)).

The protein belongs to the PAL/histidase family. Contains an active site 4-methylidene-imidazol-5-one (MIO), which is formed autocatalytically by cyclization and dehydration of residues Ala-Ser-Gly.

Its subcellular location is the cytoplasm. It catalyses the reaction L-histidine = trans-urocanate + NH4(+). It participates in amino-acid degradation; L-histidine degradation into L-glutamate; N-formimidoyl-L-glutamate from L-histidine: step 1/3. The protein is Histidine ammonia-lyase of Caulobacter sp. (strain K31).